Reading from the N-terminus, the 68-residue chain is MGTKIKTHKGTKKRFRLSAKGKAMHRQSGTSHLAKGLSKKRRRNLRGTTAVAECMEPTIHAALNGHSY.

The segment covering 1–25 has biased composition (basic residues); it reads MGTKIKTHKGTKKRFRLSAKGKAMH. The disordered stretch occupies residues 1–43; sequence MGTKIKTHKGTKKRFRLSAKGKAMHRQSGTSHLAKGLSKKRRR.

It belongs to the bacterial ribosomal protein bL35 family.

In Rhodopirellula baltica (strain DSM 10527 / NCIMB 13988 / SH1), this protein is Large ribosomal subunit protein bL35.